The sequence spans 141 residues: Antifungal protein ginkbilobin-like protein 1 (141 aa).

The signal sequence occupies residues 1–32; it reads MSISSKFQLRSSTSLLLLVALMVVMGMDGAAA. Residues 36 to 141 enclose the Gnk2-homologous domain; that stretch reads TNFVSSACNT…CFIQYEQHSF (106 aa). 3 cysteine pairs are disulfide-bonded: C43–C119, C95–C104, and C107–C132. N44 lines the alpha-D-mannopyranose pocket. Positions 126 and 137 each coordinate alpha-D-mannopyranose.

Exerts antifungal activity through its carbohydrate-binding specificity. This Picea glauca (White spruce) protein is Antifungal protein ginkbilobin-like protein 1.